A 384-amino-acid polypeptide reads, in one-letter code: DNA repair protein RAD51 homolog 2 (384 aa).

Positions 1 to 75 (MGSKKLKRVG…TAYGIKAQRS (75 aa)) are interaction with RAD51C. 108–115 (GPPGCGKT) contacts ATP.

Belongs to the RecA family. RAD51 subfamily. Part of the BCDX2 complex consisting of RAD51B, RAD51C, RAD51D and XRCC2; the complex has a ring-like structure arranged into a flat disc around a central channel. The BCDX2 subcomplex RAD51B:RAD51C interacts with RAD51. Interacts with SWSAP1; involved in homologous recombination repair. Interacts with HELQ. Post-translationally, phosphorylated on tyrosine residues by BCR-ABL. Expressed in a wide range of tissues.

It is found in the nucleus. Involved in the homologous recombination repair (HRR) pathway of double-stranded DNA breaks arising during DNA replication or induced by DNA-damaging agents. May promote the assembly of presynaptic RAD51 nucleoprotein filaments. Binds single-stranded DNA and double-stranded DNA and has DNA-dependent ATPase activity. Part of the RAD51 paralog protein complex BCDX2 which acts in the BRCA1-BRCA2-dependent HR pathway. Upon DNA damage, BCDX2 acts downstream of BRCA2 recruitment and upstream of RAD51 recruitment. BCDX2 binds predominantly to the intersection of the four duplex arms of the Holliday junction and to junction of replication forks. The BCDX2 complex was originally reported to bind single-stranded DNA, single-stranded gaps in duplex DNA and specifically to nicks in duplex DNA. The BCDX2 subcomplex RAD51B:RAD51C exhibits single-stranded DNA-dependent ATPase activity suggesting an involvement in early stages of the HR pathway. The protein is DNA repair protein RAD51 homolog 2 (RAD51B) of Homo sapiens (Human).